We begin with the raw amino-acid sequence, 251 residues long: Endoglucanase CX (251 aa).

This sequence belongs to the glycosyl hydrolase 9 (cellulase E) family.

The catalysed reaction is Endohydrolysis of (1-&gt;4)-beta-D-glucosidic linkages in cellulose, lichenin and cereal beta-D-glucans.. Functionally, degrades carboxymethylcellulose (CMC). The sequence is that of Endoglucanase CX from Prunus persica (Peach).